The primary structure comprises 465 residues: Soluble pyridine nucleotide transhydrogenase (465 aa).

35–44 (ERYNNVGGGC) is a binding site for FAD.

Belongs to the class-I pyridine nucleotide-disulfide oxidoreductase family. FAD serves as cofactor.

The protein localises to the cytoplasm. It carries out the reaction NAD(+) + NADPH = NADH + NADP(+). Functionally, conversion of NADPH, generated by peripheral catabolic pathways, to NADH, which can enter the respiratory chain for energy generation. The protein is Soluble pyridine nucleotide transhydrogenase of Photorhabdus laumondii subsp. laumondii (strain DSM 15139 / CIP 105565 / TT01) (Photorhabdus luminescens subsp. laumondii).